The following is an 83-amino-acid chain: Cytochrome c oxidase subunit 7A2, mitochondrial (83 aa).

The N-terminal 23 residues, 1–23 (MLRNLLALRQIGQRTISTASRRH), are a transit peptide targeting the mitochondrion. Over 24–48 (FKNKVPEKQKLFQEDDEIPLYLKGG) the chain is Mitochondrial matrix. N6-acetyllysine is present on Lys-33. Residues 49 to 77 (VADALLYRATMILTVGGTAYAIYELAVAS) traverse the membrane as a helical segment. The Mitochondrial intermembrane portion of the chain corresponds to 78–83 (FPKKQE).

Belongs to the cytochrome c oxidase VIIa family. In terms of assembly, component of the cytochrome c oxidase (complex IV, CIV), a multisubunit enzyme composed of 14 subunits. The complex is composed of a catalytic core of 3 subunits MT-CO1, MT-CO2 and MT-CO3, encoded in the mitochondrial DNA, and 11 supernumerary subunits COX4I1 (or COX4I2), COX5A, COX5B, COX6A1 (or COX6A2), COX6B1 (or COX6B2), COX6C, COX7A2 (or COX7A1), COX7B, COX7C, COX8A and NDUFA4, which are encoded in the nuclear genome. The complex exists as a monomer or a dimer and forms supercomplexes (SCs) in the inner mitochondrial membrane with NADH-ubiquinone oxidoreductase (complex I, CI) and ubiquinol-cytochrome c oxidoreductase (cytochrome b-c1 complex, complex III, CIII), resulting in different assemblies (supercomplex SCI(1)III(2)IV(1) and megacomplex MCI(2)III(2)IV(2)). Interacts with PET100.

It localises to the mitochondrion inner membrane. The protein operates within energy metabolism; oxidative phosphorylation. Functionally, component of the cytochrome c oxidase, the last enzyme in the mitochondrial electron transport chain which drives oxidative phosphorylation. The respiratory chain contains 3 multisubunit complexes succinate dehydrogenase (complex II, CII), ubiquinol-cytochrome c oxidoreductase (cytochrome b-c1 complex, complex III, CIII) and cytochrome c oxidase (complex IV, CIV), that cooperate to transfer electrons derived from NADH and succinate to molecular oxygen, creating an electrochemical gradient over the inner membrane that drives transmembrane transport and the ATP synthase. Cytochrome c oxidase is the component of the respiratory chain that catalyzes the reduction of oxygen to water. Electrons originating from reduced cytochrome c in the intermembrane space (IMS) are transferred via the dinuclear copper A center (CU(A)) of subunit 2 and heme A of subunit 1 to the active site in subunit 1, a binuclear center (BNC) formed by heme A3 and copper B (CU(B)). The BNC reduces molecular oxygen to 2 water molecules using 4 electrons from cytochrome c in the IMS and 4 protons from the mitochondrial matrix. The polypeptide is Cytochrome c oxidase subunit 7A2, mitochondrial (COX7A2) (Homo sapiens (Human)).